The primary structure comprises 119 residues: Large ribosomal subunit protein bL20 (119 aa).

Belongs to the bacterial ribosomal protein bL20 family.

Binds directly to 23S ribosomal RNA and is necessary for the in vitro assembly process of the 50S ribosomal subunit. It is not involved in the protein synthesizing functions of that subunit. The polypeptide is Large ribosomal subunit protein bL20 (Rhodopseudomonas palustris (strain BisB5)).